Here is a 118-residue protein sequence, read N- to C-terminus: Acetylcholine receptor subunit beta (118 aa).

The N-terminal stretch at 1-15 (APTVALLLLCALCSA) is a signal peptide.

This sequence belongs to the ligand-gated ion channel (TC 1.A.9) family. Acetylcholine receptor (TC 1.A.9.1) subfamily. Beta-1/CHRNB1 sub-subfamily. In terms of assembly, pentamer of two alpha chains, and one each of the beta, delta, and gamma chains.

The protein localises to the postsynaptic cell membrane. It is found in the cell membrane. It catalyses the reaction K(+)(in) = K(+)(out). It carries out the reaction Na(+)(in) = Na(+)(out). Its function is as follows. After binding acetylcholine, the AChR responds by an extensive change in conformation that affects all subunits and leads to opening of an ion-conducting channel across the plasma membrane. This chain is Acetylcholine receptor subunit beta (CHRNB1), found in Gallus gallus (Chicken).